A 1124-amino-acid polypeptide reads, in one-letter code: Phytochrome A (1124 aa).

Low complexity predominate over residues 1 to 19 (MSTTRPSQSSNNSGRSRNS). The interval 1-21 (MSTTRPSQSSNNSGRSRNSAR) is disordered. The region spanning 218–401 (SMERLCDTMV…VFAIHVNKEI (184 aa)) is the GAF domain. A phytochromobilin-binding site is contributed by Cys-323. PAS domains are found at residues 617–687 (VTSE…LQGE) and 750–821 (DYKA…VNFG). The 220-residue stretch at 901–1120 (YMKRQIRNPL…ILSVELAAAH (220 aa)) folds into the Histidine kinase domain.

It belongs to the phytochrome family. As to quaternary structure, homodimer. Contains one covalently linked phytochromobilin chromophore.

In terms of biological role, regulatory photoreceptor which exists in two forms that are reversibly interconvertible by light: the Pr form that absorbs maximally in the red region of the spectrum and the Pfr form that absorbs maximally in the far-red region. Photoconversion of Pr to Pfr induces an array of morphogenic responses, whereas reconversion of Pfr to Pr cancels the induction of those responses. Pfr controls the expression of a number of nuclear genes including those encoding the small subunit of ribulose-bisphosphate carboxylase, chlorophyll A/B binding protein, protochlorophyllide reductase, rRNA, etc. It also controls the expression of its own gene(s) in a negative feedback fashion. This is Phytochrome A (PHYA) from Pisum sativum (Garden pea).